The primary structure comprises 450 residues: MTHVRFDYSRALPFFKEQELTYLRDFVKVAHHTIHEKTGAGSDFLGWVDLPTDYDKEEFARIKKCAEKIQNDSDVLLVVGIGGSYLGARAAIEMLNHSFYNVLPKEKRKTPQVIFIGNNISSSYMRDVMDLLEDADFSINVISKSGTTTEPAIAFRIFRKLLEEKYGKEEAKRRIYATTDKERGALKTLANEEGFESFIIPDDVGGRFSVLTAVGLLPIAVSGADIDEMMKGARDASKDFSTSELEDNPAYQYAVVRNVLYNKGKTIEMLINYEPGLQYFAEWWKQLFGESEGKDEKGIYPSSANFSTDLHSLGQYVQEGRRDMFETVLNVEKPRHELTIEEADNDLDGLNYLAGKTVDFVNKKAFQGTMLAHTDGNVPNLIVNVPEMNAYTFGYLVYFFEKACAMSGYLLGVNPFDQPGVEAYKVNMFALLGKPGFEEKKAELEKRLNQ.

Phosphothreonine is present on Thr38. Glu290 functions as the Proton donor in the catalytic mechanism. Residues His311 and Lys425 contribute to the active site.

This sequence belongs to the GPI family.

The protein resides in the cytoplasm. The enzyme catalyses alpha-D-glucose 6-phosphate = beta-D-fructose 6-phosphate. It functions in the pathway carbohydrate biosynthesis; gluconeogenesis. It participates in carbohydrate degradation; glycolysis; D-glyceraldehyde 3-phosphate and glycerone phosphate from D-glucose: step 2/4. Catalyzes the reversible isomerization of glucose-6-phosphate to fructose-6-phosphate. This chain is Glucose-6-phosphate isomerase, found in Bacillus licheniformis (strain ATCC 14580 / DSM 13 / JCM 2505 / CCUG 7422 / NBRC 12200 / NCIMB 9375 / NCTC 10341 / NRRL NRS-1264 / Gibson 46).